The following is a 439-amino-acid chain: Ribulose bisphosphate carboxylase/oxygenase activase, chloroplastic (439 aa).

An ATP-binding site is contributed by 167–174 (GGKGQGKS).

Belongs to the RuBisCO activase family.

It is found in the plastid. It localises to the chloroplast stroma. In terms of biological role, activation of RuBisCO (ribulose-1,5-bisphosphate carboxylase/oxygenase; EC 4.1.1.39) involves the ATP-dependent carboxylation of the epsilon-amino group of lysine leading to a carbamate structure. In Vigna radiata var. radiata (Mung bean), this protein is Ribulose bisphosphate carboxylase/oxygenase activase, chloroplastic (RCA).